A 757-amino-acid polypeptide reads, in one-letter code: Amine oxidase [copper-containing] 2 (757 aa).

Residues 1-4 (MNLK) lie on the Cytoplasmic side of the membrane. A helical membrane pass occupies residues 5-25 (VLLLLLGLSFLTVFALVYVLL). The Extracellular portion of the chain corresponds to 26-757 (TRQGSFSQSP…NLPSFSYEGL (732 aa)). Residues N133, N198, and N226 are each glycosylated (N-linked (GlcNAc...) asparagine). D381 acts as the Proton acceptor in catalysis. Cysteines 399 and 425 form a disulfide. Residue Y466 is the Schiff-base intermediate with substrate; via topaquinone of the active site. Y466 bears the 2',4',5'-topaquinone mark. Cu(2+) contacts are provided by H517 and H519. The Ca(2+) site is built by D526, L527, D528, E569, E638, F660, and N662. An N-linked (GlcNAc...) asparagine glycan is attached at N663. Ca(2+) contacts are provided by E664, D670, and L671. H681 is a binding site for Cu(2+). C731 and C738 form a disulfide bridge.

The protein belongs to the copper/topaquinone oxidase family. Homodimer; disulfide-linked. Probably forms heterodimers with AOC3. The cofactor is Cu(2+). Requires Ca(2+) as cofactor. L-topaquinone serves as cofactor. Post-translationally, topaquinone (TPQ) is generated by copper-dependent autoxidation of a specific tyrosyl residue. Significantly much highly expressed in retina.

It is found in the cell membrane. It carries out the reaction 2-phenylethylamine + O2 + H2O = 2-phenylacetaldehyde + H2O2 + NH4(+). It catalyses the reaction tryptamine + O2 + H2O = indole-3-acetaldehyde + H2O2 + NH4(+). The enzyme catalyses tyramine + O2 + H2O = (4-hydroxyphenyl)acetaldehyde + H2O2 + NH4(+). In terms of biological role, catalyzes the oxidative deamination of primary amines to the corresponding aldehydes with the concomitant production of hydrogen peroxide and ammonia. Has a preference for 2-phenylethylamine, tryptamine and tyramine. Could also act on methylamine and benzylamine but much less efficiently. The polypeptide is Amine oxidase [copper-containing] 2 (Mus musculus (Mouse)).